Reading from the N-terminus, the 526-residue chain is ATP synthase subunit alpha (526 aa).

Residue 171–178 (GDRQTGKT) participates in ATP binding.

The protein belongs to the ATPase alpha/beta chains family. As to quaternary structure, F-type ATPases have 2 components, CF(1) - the catalytic core - and CF(0) - the membrane proton channel. CF(1) has five subunits: alpha(3), beta(3), gamma(1), delta(1), epsilon(1). CF(0) has four main subunits: a, b, b' and c.

The protein localises to the cell inner membrane. The enzyme catalyses ATP + H2O + 4 H(+)(in) = ADP + phosphate + 5 H(+)(out). Functionally, produces ATP from ADP in the presence of a proton gradient across the membrane. The alpha chain is a regulatory subunit. This is ATP synthase subunit alpha from Pelodictyon phaeoclathratiforme (strain DSM 5477 / BU-1).